The sequence spans 109 residues: T cell receptor alpha variable 26-1 (109 aa).

A signal peptide spans 1–19 (MRLVARVTVFLTFGTIIDA). The 90-residue stretch at 20–109 (KTTQPTSMDC…TAVYYCIVRV (90 aa)) folds into the Ig-like domain. Cys39 and Cys105 are disulfide-bonded. N-linked (GlcNAc...) asparagine glycosylation is found at Asn40 and Asn71.

In terms of assembly, alpha-beta TR is a heterodimer composed of an alpha and beta chain; disulfide-linked. The alpha-beta TR is associated with the transmembrane signaling CD3 coreceptor proteins to form the TR-CD3 (TcR or TCR). The assembly of alpha-beta TR heterodimers with CD3 occurs in the endoplasmic reticulum where a single alpha-beta TR heterodimer associates with one CD3D-CD3E heterodimer, one CD3G-CD3E heterodimer and one CD247 homodimer forming a stable octameric structure. CD3D-CD3E and CD3G-CD3E heterodimers preferentially associate with TR alpha and TR beta chains, respectively. The association of the CD247 homodimer is the last step of TcR assembly in the endoplasmic reticulum and is required for transport to the cell surface.

The protein resides in the cell membrane. V region of the variable domain of T cell receptor (TR) alpha chain that participates in the antigen recognition. Alpha-beta T cell receptors are antigen specific receptors which are essential to the immune response and are present on the cell surface of T lymphocytes. Recognize peptide-major histocompatibility (MH) (pMH) complexes that are displayed by antigen presenting cells (APC), a prerequisite for efficient T cell adaptive immunity against pathogens. Binding of alpha-beta TR to pMH complex initiates TR-CD3 clustering on the cell surface and intracellular activation of LCK that phosphorylates the ITAM motifs of CD3G, CD3D, CD3E and CD247 enabling the recruitment of ZAP70. In turn ZAP70 phosphorylates LAT, which recruits numerous signaling molecules to form the LAT signalosome. The LAT signalosome propagates signal branching to three major signaling pathways, the calcium, the mitogen-activated protein kinase (MAPK) kinase and the nuclear factor NF-kappa-B (NF-kB) pathways, leading to the mobilization of transcription factors that are critical for gene expression and essential for T cell growth and differentiation. The T cell repertoire is generated in the thymus, by V-(D)-J rearrangement. This repertoire is then shaped by intrathymic selection events to generate a peripheral T cell pool of self-MH restricted, non-autoaggressive T cells. Post-thymic interaction of alpha-beta TR with the pMH complexes shapes TR structural and functional avidity. The polypeptide is T cell receptor alpha variable 26-1 (Homo sapiens (Human)).